The sequence spans 311 residues: MGSPNSLFEVESFLKNMFNDPLILGIKNTFARKMLASFITHSRVEETKKNYQAIGGKSPLTAHTLNLTNKLNELDCKRFYTYAMRYTPPFAYQVLEDIKTQGIQSVVLFSLYPQFSYSTIASSLIDAKAALQKLAFTPTLYEISSYHTHPDYISCIIERIKESLGADNPNEFVLLLSAHSLPQSRIDEGDPYQKQCEENKEVIQKALESEGIVFKKIALAYQSKVGRMKWIGPSTKETITKYKKHKMIIFPLSFTLDNSETEYELKILYASLAKELNVPQYRVCSCFNDNERFAKSIMNILEEHLRGKAEV.

Residues His179 and Glu260 each coordinate Fe cation.

This sequence belongs to the ferrochelatase family.

It is found in the cytoplasm. The enzyme catalyses heme b + 2 H(+) = protoporphyrin IX + Fe(2+). The protein operates within porphyrin-containing compound metabolism; protoheme biosynthesis; protoheme from protoporphyrin-IX: step 1/1. Catalyzes the ferrous insertion into protoporphyrin IX. The polypeptide is Ferrochelatase (Helicobacter hepaticus (strain ATCC 51449 / 3B1)).